Here is a 147-residue protein sequence, read N- to C-terminus: UPF0306 protein YhbP (147 aa).

The protein belongs to the UPF0306 family.

The polypeptide is UPF0306 protein YhbP (Escherichia coli (strain SMS-3-5 / SECEC)).